A 470-amino-acid polypeptide reads, in one-letter code: UDP-glycosyltransferase 91A1 (470 aa).

UDP-alpha-D-glucose is bound by residues Ser-290, 350–352 (VEQ), 367–375 (HPGWGTIIE), and 389–392 (VYDQ).

The protein belongs to the UDP-glycosyltransferase family.

This is UDP-glycosyltransferase 91A1 (UGT91A1) from Arabidopsis thaliana (Mouse-ear cress).